We begin with the raw amino-acid sequence, 427 residues long: Acyltransferase fer5 (427 aa).

A disordered region spans residues 1–24 (MTAATSVQPSPAPRQPGLRATFNP). Residue H342 participates in substrate binding. The active-site Proton acceptor is E380.

It belongs to the lysine N-acyltransferase mbtK family.

Its pathway is siderophore biosynthesis. Its function is as follows. Acyltransferase; part of the gene cluster that mediates the biosynthesis of siderophore ferrichrome A which is contributing to organismal virulence. The first step of ferrichrome A biosynthesis is performed by the HMG-CoA synthase hcs1 which catalyzes the generation of HMG-CoA and CoA using acetoacetyl-CoA and acetyl-CoA as substrates. The enoyl-CoA isomerase/hydratase fer4 then catalyzes the conversion of hcs1-produced HMG-CoA to methylglutaconyl-CoA. The acyltransferase fer5 then fuses the fer4-generated methylglutaconyl-CoA with sid1-generated hydroxyornithine to yield methylglutaconyl hydroxyornithine. Methylglutaconyl hydroxyornithine is then available for use by the NRPS fer3 to generate ferrichrome A. This chain is Acyltransferase fer5, found in Mycosarcoma maydis (Corn smut fungus).